The following is a 66-amino-acid chain: Large ribosomal subunit protein uL29 (66 aa).

It belongs to the universal ribosomal protein uL29 family.

This is Large ribosomal subunit protein uL29 from Thermosipho melanesiensis (strain DSM 12029 / CIP 104789 / BI429).